Consider the following 1342-residue polypeptide: DNA-directed RNA polymerase subunit beta (1342 aa).

The protein belongs to the RNA polymerase beta chain family. The RNAP catalytic core consists of 2 alpha, 1 beta, 1 beta' and 1 omega subunit. When a sigma factor is associated with the core the holoenzyme is formed, which can initiate transcription.

It carries out the reaction RNA(n) + a ribonucleoside 5'-triphosphate = RNA(n+1) + diphosphate. Functionally, DNA-dependent RNA polymerase catalyzes the transcription of DNA into RNA using the four ribonucleoside triphosphates as substrates. The chain is DNA-directed RNA polymerase subunit beta from Pasteurella multocida (strain Pm70).